The following is a 414-amino-acid chain: DNA primase small subunit PriS (414 aa).

Active-site residues include Asp98, Asp100, and Asp312.

The protein belongs to the eukaryotic-type primase small subunit family. Heterodimer of a small subunit (PriS) and a large subunit (PriL). Requires Mg(2+) as cofactor. The cofactor is Mn(2+).

Catalytic subunit of DNA primase, an RNA polymerase that catalyzes the synthesis of short RNA molecules used as primers for DNA polymerase during DNA replication. The small subunit contains the primase catalytic core and has DNA synthesis activity on its own. Binding to the large subunit stabilizes and modulates the activity, increasing the rate of DNA synthesis while decreasing the length of the DNA fragments, and conferring RNA synthesis capability. The DNA polymerase activity may enable DNA primase to also catalyze primer extension after primer synthesis. May also play a role in DNA repair. The sequence is that of DNA primase small subunit PriS from Methanosarcina mazei (strain ATCC BAA-159 / DSM 3647 / Goe1 / Go1 / JCM 11833 / OCM 88) (Methanosarcina frisia).